Reading from the N-terminus, the 421-residue chain is Histidine--tRNA ligase (421 aa).

This sequence belongs to the class-II aminoacyl-tRNA synthetase family. Homodimer.

Its subcellular location is the cytoplasm. It catalyses the reaction tRNA(His) + L-histidine + ATP = L-histidyl-tRNA(His) + AMP + diphosphate + H(+). The protein is Histidine--tRNA ligase of Francisella tularensis subsp. holarctica (strain FTNF002-00 / FTA).